A 1098-amino-acid chain; its full sequence is Transcription elongation regulator 1 (1098 aa).

The segment covering 1-15 has biased composition (basic and acidic residues); sequence MAERGGDGGESERFN. Positions 1-105 are disordered; it reads MAERGGDGGE…RPPFMPPPMS (105 aa). A Phosphoserine modification is found at serine 11. Arginine 20 is modified (omega-N-methylarginine). Residues arginine 28, arginine 30, arginine 41, and arginine 48 each carry the asymmetric dimethylarginine modification. The segment covering 32–105 has biased composition (pro residues); that stretch reads PAPPPNAVMR…RPPFMPPPMS (74 aa). A WW 1 domain is found at 131-164; sequence PPTEEIWVENKTPDGKVYYYNARTRESAWTKPDG. The stretch at 184 to 244 forms a coiled coil; that stretch reads QAQAQAQAQA…AQAQAQAQVQ (61 aa). Low complexity predominate over residues 259 to 333; it reads STPTTSSPAP…PTATPVQTVP (75 aa). The tract at residues 259–348 is disordered; it reads STPTTSSPAP…TLPPAVPHSV (90 aa). A compositionally biased stretch (pro residues) spans 334–344; sequence QPHPQTLPPAV. In terms of domain architecture, WW 2 spans 429-462; that stretch reads ATAVSEWTEYKTADGKTYYYNNRTLESTWEKPQE. Basic and acidic residues-rich tracts occupy residues 469–481 and 496–506; these read LEEK…KEPS and EEPIKEIKEEP. The segment at 469–526 is disordered; it reads LEEKIKEPIKEPSEEPLPMETEEEDPKEEPIKEIKEEPKEEEMTEEEKAAQKAKPVAT. Residues lysine 503 and lysine 507 each participate in a glycyl lysine isopeptide (Lys-Gly) (interchain with G-Cter in SUMO2) cross-link. Positions 528–561 constitute a WW 3 domain; that stretch reads PIPGTPWCVVWTGDERVFFYNPTTRLSMWDRPDD. Positions 606–655 form a coiled coil; the sequence is AIKEEQELMEEINEDEPVKAKKRKRDDNKDIDSEKEAAMEAEIKAARERA. Residue lysine 608 forms a Glycyl lysine isopeptide (Lys-Gly) (interchain with G-Cter in SUMO2) linkage. The interval 615 to 640 is disordered; it reads EEINEDEPVKAKKRKRDDNKDIDSEK. A Nuclear localization signal motif is present at residues 626 to 630; that stretch reads KKRKR. Residues 630-640 are compositionally biased toward basic and acidic residues; sequence RDDNKDIDSEK. At serine 638 the chain carries Phosphoserine. FF domains are found at residues 659-712, 725-779, and 791-846; these read LEAR…YVKT, IMQA…FVAA, and RGEK…YIEK. Serine 834 carries the phosphoserine modification. Positions 844 to 906 form a coiled coil; it reads IEKIAKNLDS…EEAIQNFKAL (63 aa). The segment at 870–895 is disordered; the sequence is REREREVQKARSEQTKEIDREREQHK. 3 FF domains span residues 896-952, 954-1010, and 1012-1077; these read REEA…HIEA, TKKK…YIRD, and YITA…YVDD. Serine 933 is modified (phosphoserine). The tract at residues 1076–1098 is disordered; that stretch reads DDLDRRGPPPPPTASEPTRRSTK.

In terms of assembly, binds formin. Interacts (via the second WW domain) with TREX1 (via proline-rich region). Binds RNA polymerase II, HD and SF1. In terms of tissue distribution, detected in brain neurons.

It localises to the nucleus. Transcription factor that binds RNA polymerase II and inhibits the elongation of transcripts from target promoters. Regulates transcription elongation in a TATA box-dependent manner. Necessary for TAT-dependent activation of the human immunodeficiency virus type 1 (HIV-1) promoter. The protein is Transcription elongation regulator 1 (TCERG1) of Homo sapiens (Human).